The primary structure comprises 459 residues: Exodeoxyribonuclease 7 large subunit (459 aa).

This sequence belongs to the XseA family. As to quaternary structure, heterooligomer composed of large and small subunits.

The protein localises to the cytoplasm. It catalyses the reaction Exonucleolytic cleavage in either 5'- to 3'- or 3'- to 5'-direction to yield nucleoside 5'-phosphates.. In terms of biological role, bidirectionally degrades single-stranded DNA into large acid-insoluble oligonucleotides, which are then degraded further into small acid-soluble oligonucleotides. The polypeptide is Exodeoxyribonuclease 7 large subunit (Pseudomonas syringae pv. tomato (strain ATCC BAA-871 / DC3000)).